The chain runs to 852 residues: DNA polymerase kappa (852 aa).

The UmuC domain occupies 102–357; the sequence is IVHVDMDAFY…LPIRKVSGIG (256 aa). Mg(2+) contacts are provided by aspartate 106 and aspartate 197. The disordered stretch occupies residues 252-273; it reads FEDSPPDLQPQGSPFQLNSEEQ. The segment covering 261 to 273 has biased composition (polar residues); sequence PQGSPFQLNSEEQ. UBZ4-type zinc fingers lie at residues 619–649 and 761–791; these read TFICPVCFREQEGVSLEAFNEHVDECLDGPS and ALVCPVCNLEQETSDLTLFNIHVDICLNKGI. Zn(2+) is bound by residues cysteine 622, cysteine 625, histidine 640, cysteine 644, cysteine 764, cysteine 767, histidine 782, and cysteine 786. Residues 798–852 form a disordered region; sequence SEGNSVKQPKESSRSTDRLQKASGRTKRPGTKTKSSTLKKTKPRDPRHTLDGFFK. Residues 805-817 are compositionally biased toward basic and acidic residues; sequence QPKESSRSTDRLQ. Over residues 821-839 the composition is skewed to basic residues; sequence GRTKRPGTKTKSSTLKKTK. The segment covering 840–852 has biased composition (basic and acidic residues); it reads PRDPRHTLDGFFK.

The protein belongs to the DNA polymerase type-Y family. Interacts with PCNA. Interacts with REV1. Mg(2+) is required as a cofactor. Mn(2+) serves as cofactor. Detected at low levels in heart, brain, lung, liver, kidney and testis.

The protein localises to the nucleus. It carries out the reaction DNA(n) + a 2'-deoxyribonucleoside 5'-triphosphate = DNA(n+1) + diphosphate. Its function is as follows. DNA polymerase specifically involved in DNA repair. Plays an important role in translesion synthesis, where the normal high-fidelity DNA polymerases cannot proceed and DNA synthesis stalls. Depending on the context, it inserts the correct base, but causes frequent base transitions, transversions and frameshifts. Lacks 3'-5' proofreading exonuclease activity. Forms a Schiff base with 5'-deoxyribose phosphate at abasic sites, but does not have lyase activity. This chain is DNA polymerase kappa (Polk), found in Mus musculus (Mouse).